Consider the following 574-residue polypeptide: Septation ring formation regulator EzrA (574 aa).

Residues 1–7 (MSSGLIL) are Extracellular-facing. The chain crosses the membrane as a helical span at residues 8 to 26 (LIVAIVLLVIIAYLVGVII). Topologically, residues 27–574 (RKRNDTLITS…YEKTRERIRF (548 aa)) are cytoplasmic. 4 coiled-coil regions span residues 102–131 (NFIR…REAL), 161–190 (ENED…FVAL), 276–379 (VTLD…QQEK), and 459–493 (QLEA…NLEE).

This sequence belongs to the EzrA family.

The protein resides in the cell membrane. Functionally, negative regulator of FtsZ ring formation; modulates the frequency and position of FtsZ ring formation. Inhibits FtsZ ring formation at polar sites. Interacts either with FtsZ or with one of its binding partners to promote depolymerization. The sequence is that of Septation ring formation regulator EzrA from Streptococcus equi subsp. zooepidemicus (strain MGCS10565).